The chain runs to 533 residues: Peptidyl-prolyl cis-trans isomerase-like 2 (533 aa).

The U-box domain occupies 38-111; the sequence is KRLPFYCCSL…DEYFCPVTYK (74 aa). The region spanning 284–438 is the PPIase cyclophilin-type domain; the sequence is KKSYARIITN…REIKIKQIQM (155 aa). Positions 443–519 form a coiled coil; that stretch reads FEEYQRRLKN…SNEGEELQKK (77 aa). A compositionally biased stretch (basic and acidic residues) spans 454-477; sequence LTHEANAERENEEMRKRREKEEKM. Positions 454 to 533 are disordered; it reads LTHEANAERE…KTTFGNFDNF (80 aa). The span at 523–533 shows a compositional bias: polar residues; it reads TKTTFGNFDNF.

The protein belongs to the cyclophilin-type PPIase family. PPIL2 subfamily.

It is found in the nucleus. It catalyses the reaction [protein]-peptidylproline (omega=180) = [protein]-peptidylproline (omega=0). The catalysed reaction is S-ubiquitinyl-[E2 ubiquitin-conjugating enzyme]-L-cysteine + [acceptor protein]-L-lysine = [E2 ubiquitin-conjugating enzyme]-L-cysteine + N(6)-ubiquitinyl-[acceptor protein]-L-lysine.. Its pathway is protein modification; protein ubiquitination. Functionally, may catalyze the cis-trans isomerization of proline imidic peptide bonds in oligopeptides thereby assisting the folding of proteins. May also function as a chaperone, playing a role in intracellular transport of proteins. May also have a protein ubiquitin ligase activity acting as an E3 ubiquitin protein ligase or as a ubiquitin-ubiquitin ligase promoting elongation of ubiquitin chains on proteins. In Rhizopus delemar (strain RA 99-880 / ATCC MYA-4621 / FGSC 9543 / NRRL 43880) (Mucormycosis agent), this protein is Peptidyl-prolyl cis-trans isomerase-like 2 (cyp14).